The sequence spans 64 residues: Large ribosomal subunit protein bL35 (64 aa).

This sequence belongs to the bacterial ribosomal protein bL35 family.

This Aliivibrio fischeri (strain ATCC 700601 / ES114) (Vibrio fischeri) protein is Large ribosomal subunit protein bL35.